The following is an 861-amino-acid chain: Bifunctional uridylyltransferase/uridylyl-removing enzyme (861 aa).

A uridylyltransferase region spans residues 1–321; sequence MKNDNRIIKN…VYHQKQKIIR (321 aa). A uridylyl-removing region spans residues 322–678; that stretch reads LDDEFQLSNR…IMPHHSQGGT (357 aa). The HD domain maps to 440–562; that stretch reads VDQHTLFVIR…LPHAKYLDYL (123 aa). ACT domains lie at 679-760 and 788-861; these read EVFI…AVSR and QLFL…KSKY.

Belongs to the GlnD family. Mg(2+) is required as a cofactor.

It carries out the reaction [protein-PII]-L-tyrosine + UTP = [protein-PII]-uridylyl-L-tyrosine + diphosphate. It catalyses the reaction [protein-PII]-uridylyl-L-tyrosine + H2O = [protein-PII]-L-tyrosine + UMP + H(+). Uridylyltransferase (UTase) activity is inhibited by glutamine, while glutamine activates uridylyl-removing (UR) activity. Functionally, modifies, by uridylylation and deuridylylation, the PII regulatory proteins (GlnB and homologs), in response to the nitrogen status of the cell that GlnD senses through the glutamine level. Under low glutamine levels, catalyzes the conversion of the PII proteins and UTP to PII-UMP and PPi, while under higher glutamine levels, GlnD hydrolyzes PII-UMP to PII and UMP (deuridylylation). Thus, controls uridylylation state and activity of the PII proteins, and plays an important role in the regulation of nitrogen assimilation and metabolism. In Legionella pneumophila (strain Lens), this protein is Bifunctional uridylyltransferase/uridylyl-removing enzyme.